The sequence spans 176 residues: Ribosome maturation factor RimM (176 aa).

The region spanning 99 to 173 (ADEYYWHDLL…TMTITPLEGL (75 aa)) is the PRC barrel domain.

This sequence belongs to the RimM family. Binds ribosomal protein uS19.

It localises to the cytoplasm. Functionally, an accessory protein needed during the final step in the assembly of 30S ribosomal subunit, possibly for assembly of the head region. Essential for efficient processing of 16S rRNA. May be needed both before and after RbfA during the maturation of 16S rRNA. It has affinity for free ribosomal 30S subunits but not for 70S ribosomes. This Trichlorobacter lovleyi (strain ATCC BAA-1151 / DSM 17278 / SZ) (Geobacter lovleyi) protein is Ribosome maturation factor RimM.